Here is a 576-residue protein sequence, read N- to C-terminus: Epsin-1 (576 aa).

A 1,2-diacyl-sn-glycero-3-phospho-(1D-myo-inositol-4,5-bisphosphate)-binding residues include Arg8, Lys11, Arg25, Asn30, Arg63, and His73. One can recognise an ENTH domain in the interval 12–144; sequence NIVHNYSEAE…RDEDRLREER (133 aa). The tract at residues 149–185 is disordered; it reads KTKEKLAQTATASSAAVGSGPPPEAEQAWPQSSGEEE. Low complexity predominate over residues 157–167; it reads TATASSAAVGS. 3 consecutive UIM domains span residues 183–202, 208–227, and 233–252; these read EEEL…ADQP, EDDA…HDKE, and GDDL…TGGK. Residues 265–296 are compositionally biased toward low complexity; it reads TAPAPAPTTDPWGGPAPMAAAVPTAAPTSDPW. Residues 265–404 are disordered; the sequence is TAPAPAPTTD…GGFDTEPDEF (140 aa). 8 tandem repeats follow at residues 274–276, 294–296, 306–308, 319–321, 332–334, 349–351, 367–369, and 377–379. An 8 X 3 AA repeats of [ED]-P-W region spans residues 274 to 379; it reads DPWGGPAPMA…TPAPAFSDPW (106 aa). The span at 297-314 shows a compositional bias: pro residues; the sequence is GGPPVPPAADPWGGPAPT. A compositionally biased stretch (low complexity) spans 332–368; it reads DPWGGTPAPAAGEGPTPDPWGSSDGGVPVSGPSASDP. Phosphoserine; by CDK1 is present on Ser382. The [DE]-X(1,2)-F-X-X-[FL]-X-X-X-R motif motif lies at 402–411; it reads DEFSDFDRLR. A phosphoserine mark is found at Ser419, Ser420, Ser435, Ser447, and Ser454. The tract at residues 448–576 is disordered; it reads LAEAVGSPPP…PAPNTNPFLL (129 aa). Pro residues predominate over residues 454–468; it reads SPPPAATPTPTPPTR. Phosphothreonine is present on residues Thr460, Thr464, and Thr470. Ser473 bears the Phosphoserine mark. Residue Thr494 is modified to Phosphothreonine. 2 repeat units span residues 502–504 and 518–520. Residues 502–574 form a 3 X 3 AA repeats of N-P-F region; sequence NPFLPGGGPA…GPPAPNTNPF (73 aa). Arg534 is modified (omega-N-methylarginine). Residues 557-570 are compositionally biased toward pro residues; sequence GLPPMMPPGPPAPN. Copy 3 of the repeat occupies 572-574; it reads NPF.

This sequence belongs to the epsin family. As to quaternary structure, monomer. Binds clathrin, ZBTB16/ZNF145 and ITSN1. Binds ubiquitinated proteins. Binds AP2A1 and AP2A2. Interacts with RALBP1 in a complex also containing NUMB and TFAP2A during interphase and mitosis. Interacts with AP2B1. Interacts with UBQLN2. Interacts with REPS2; the interaction is direct. Interacts with EPS15; the interaction is direct. Interacts with ENTREP1. In terms of processing, phosphorylated on serine and/or threonine residues in mitotic cells. Phosphorylation reduces interaction with REPS2, AP-2 and the membrane fraction. Depolarization of synaptosomes results in dephosphorylation. Ubiquitinated.

The protein localises to the cytoplasm. The protein resides in the cell membrane. Its subcellular location is the nucleus. It is found in the membrane. It localises to the clathrin-coated pit. Its function is as follows. Binds to membranes enriched in phosphatidylinositol 4,5-bisphosphate (PtdIns(4,5)P2). Modifies membrane curvature and facilitates the formation of clathrin-coated invaginations. Regulates receptor-mediated endocytosis. This chain is Epsin-1 (EPN1), found in Homo sapiens (Human).